The sequence spans 406 residues: L-carnitine CoA-transferase (406 aa).

CoA contacts are provided by Lys98 and Arg105. Catalysis depends on Asp170, which acts as the Nucleophile.

The protein belongs to the CoA-transferase III family. CaiB subfamily. In terms of assembly, homodimer.

The protein localises to the cytoplasm. The enzyme catalyses crotonobetainyl-CoA + (R)-carnitine = crotonobetaine + (R)-carnitinyl-CoA. It carries out the reaction 4-(trimethylamino)butanoyl-CoA + (R)-carnitine = (R)-carnitinyl-CoA + 4-(trimethylamino)butanoate. Its pathway is amine and polyamine metabolism; carnitine metabolism. Catalyzes the reversible transfer of the CoA moiety from gamma-butyrobetainyl-CoA to L-carnitine to generate L-carnitinyl-CoA and gamma-butyrobetaine. Is also able to catalyze the reversible transfer of the CoA moiety from gamma-butyrobetainyl-CoA or L-carnitinyl-CoA to crotonobetaine to generate crotonobetainyl-CoA. The protein is L-carnitine CoA-transferase of Proteus mirabilis (strain HI4320).